A 286-amino-acid chain; its full sequence is General stress protein 39 (286 aa).

The tract at residues 1-26 (MANYPKELPAQTQSRQPGIESEMNPS) is disordered. 46–70 (LITGGDSGIGRAVSVAYAKEGADIA) contributes to the NAD(+) binding site. Serine 178 lines the substrate pocket. Residue tyrosine 191 is the Proton acceptor of the active site.

It belongs to the short-chain dehydrogenases/reductases (SDR) family.

In Bacillus subtilis (strain 168), this protein is General stress protein 39 (ydaD).